Here is a 540-residue protein sequence, read N- to C-terminus: Chaperonin GroEL (540 aa).

ATP is bound by residues 29–32 (TLGP), 86–90 (DGTTT), Gly-413, 476–478 (NAA), and Asp-492.

It belongs to the chaperonin (HSP60) family. Forms a cylinder of 14 subunits composed of two heptameric rings stacked back-to-back. Interacts with the co-chaperonin GroES.

It localises to the cytoplasm. It carries out the reaction ATP + H2O + a folded polypeptide = ADP + phosphate + an unfolded polypeptide.. In terms of biological role, together with its co-chaperonin GroES, plays an essential role in assisting protein folding. The GroEL-GroES system forms a nano-cage that allows encapsulation of the non-native substrate proteins and provides a physical environment optimized to promote and accelerate protein folding. In Streptococcus agalactiae, this protein is Chaperonin GroEL.